The primary structure comprises 332 residues: MKTLGEFIVEKQHEFSQATGELTALLSAIKLGAKIIHRDINKAGLVDILGASGAENAQGEVQQKLDLFANEKLKAALKARDIVAGIASEEEDEIVVFEGCEHAKYVVLMDPLDGSSNIDVNVSVGTIFSIYRRVTPVGTPVTEEDFLQPGNKQVAAGYVVYGSSTMLVYTTGCGVHAFTYDPSLGVFCLCQERMRFPEKGKTYSINEGNYIKFPNGVKKYIKFCQEEDSSTSRPYTSRYIGSLVADFHRNLLKGGIYLYPSTASHPKGKLRLLYECNPMAFLAEQAGGKASDGKERILDIIPESLHQRRSFFVGNRHMVDDVERFIREYPDA.

Mg(2+) is bound by residues Glu-89, Asp-110, Leu-112, and Asp-113. Substrate-binding positions include 113-116 (DGSS), Asn-206, Tyr-239, 257-259 (YLY), and Lys-269. Glu-275 is a binding site for Mg(2+).

The protein belongs to the FBPase class 1 family. As to quaternary structure, homotetramer. Requires Mg(2+) as cofactor.

It localises to the cytoplasm. The catalysed reaction is beta-D-fructose 1,6-bisphosphate + H2O = beta-D-fructose 6-phosphate + phosphate. The protein operates within carbohydrate biosynthesis; gluconeogenesis. The polypeptide is Fructose-1,6-bisphosphatase class 1 (Salmonella gallinarum (strain 287/91 / NCTC 13346)).